The primary structure comprises 54 residues: Ribulose bisphosphate carboxylase large chain (54 aa).

Positions 1–2 (MS) are excised as a propeptide. Pro-3 carries the post-translational modification N-acetylproline. Lys-14 carries the post-translational modification N6,N6,N6-trimethyllysine.

This sequence belongs to the RuBisCO large chain family. Type I subfamily. In terms of assembly, heterohexadecamer of 8 large chains and 8 small chains.

The protein resides in the plastid. Its subcellular location is the chloroplast. It carries out the reaction 2 (2R)-3-phosphoglycerate + 2 H(+) = D-ribulose 1,5-bisphosphate + CO2 + H2O. The enzyme catalyses D-ribulose 1,5-bisphosphate + O2 = 2-phosphoglycolate + (2R)-3-phosphoglycerate + 2 H(+). Functionally, ruBisCO catalyzes two reactions: the carboxylation of D-ribulose 1,5-bisphosphate, the primary event in carbon dioxide fixation, as well as the oxidative fragmentation of the pentose substrate in the photorespiration process. Both reactions occur simultaneously and in competition at the same active site. This is Ribulose bisphosphate carboxylase large chain (rbcL) from Ilex aquifolium (English holly).